The primary structure comprises 468 residues: N-acyl-phosphatidylethanolamine-hydrolyzing phospholipase D, mitochondrial (468 aa).

The N-terminal 39 residues, 1–39 (MNFVTCHVQMRLLLQRRLVRLRESELFRPQTSLSTFKRH), are a transit peptide targeting the mitochondrion. A helical transmembrane segment spans residues 54–76 (YARILLLSVLVPYTGYAFYVSLA). Zn(2+) contacts are provided by His-265, His-267, Asp-269, His-270, His-332, and His-425.

It belongs to the NAPE-PLD family. Requires Zn(2+) as cofactor.

It localises to the mitochondrion membrane. The catalysed reaction is an N-acyl-1,2-diacyl-sn-glycero-3-phosphoethanolamine + H2O = an N-acylethanolamine + a 1,2-diacyl-sn-glycero-3-phosphate + H(+). Functionally, hydrolyzes N-acyl-phosphatidylethanolamines (NAPEs) to produce N-acylethanolamines (NAEs). The polypeptide is N-acyl-phosphatidylethanolamine-hydrolyzing phospholipase D, mitochondrial (FMP30) (Saccharomyces cerevisiae (strain ATCC 204508 / S288c) (Baker's yeast)).